A 403-amino-acid chain; its full sequence is uncharacterized protein (403 aa).

The first 26 residues, 1 to 26 (MYKFKTNLFLVIYFIAIFSIESSISS), serve as a signal peptide directing secretion. The Extracellular segment spans residues 27–381 (FNTEINSNSN…DSDNSSFGIS (355 aa)). Residues Asn-58, Asn-90, Asn-93, Asn-124, Asn-137, Asn-371, and Asn-375 are each glycosylated (N-linked (GlcNAc...) asparagine). Residues 382–402 (IQKYLNSFLNSFIIILIINII) traverse the membrane as a helical segment. A topological domain (cytoplasmic) is located at residue Ile-403.

The protein resides in the membrane. This is an uncharacterized protein from Dictyostelium discoideum (Social amoeba).